Consider the following 83-residue polypeptide: U1-theraphotoxin-Hs1f (83 aa).

The N-terminal stretch at 1-21 is a signal peptide; it reads MKVTLIAILTCAAVLVLHTTA. A propeptide spanning residues 22 to 48 is cleaved from the precursor; the sequence is AEELEESQLMEVGMPDTELAAVDEERL. 3 disulfide bridges follow: C51–C64, C55–C75, and C69–C80.

Belongs to the neurotoxin 12 (Hwtx-2) family. 02 (Hwtx-2) subfamily. In terms of tissue distribution, expressed by the venom gland.

The protein localises to the secreted. Functionally, lethal neurotoxin that blocks neuromuscular transmission. This Cyriopagopus schmidti (Chinese bird spider) protein is U1-theraphotoxin-Hs1f.